A 90-amino-acid polypeptide reads, in one-letter code: Defensin-like protein 293 (90 aa).

Positions 1-26 (MTSRAKSLFIFFFLISCTFMLLETDA) are cleaved as a signal peptide. Disulfide bonds link Cys63/Cys83, Cys69/Cys88, and Cys75/Cys90.

The protein belongs to the DEFL family.

It is found in the secreted. This chain is Defensin-like protein 293, found in Arabidopsis thaliana (Mouse-ear cress).